A 379-amino-acid chain; its full sequence is MSEPLDLNQLAQKIKQWGLELGFQQVGITDTDLSESEPKLQAWLDKQYHGEMDWMARHGMLRARPHELLPGTLRVISVRMNYLPANAAFASTLKNPKLGYVSRYALGRDYHKLLRNRLKKLGEMIQQHCVSLNFRPFVDSAPILERPLAEKAGLGWTGKHSLILNREAGSFFFLGELLVDIPLPVDQPVEEGCGKCVACMTICPTGAIVEPYTVDARRCISYLTIELEGAIPEELRPLMGNRIYGCDDCQLICPWNRYSQLTTEEDFSPRKPLHAPELIELFAWSEEKFLKVTEGSAIRRIGHLRWLRNIAVALGNAPWDETILTALESRKGEHPLLDEHIAWAIAQQIERRNACIVEVQLPKKQRLVRVIEKGLPRDA.

D139 serves as the catalytic Proton donor. The 4Fe-4S ferredoxin-type domain occupies 181 to 213 (IPLPVDQPVEEGCGKCVACMTICPTGAIVEPYT). Residues C193, C196, C199, C203, C219, C246, C249, and C253 each contribute to the [4Fe-4S] cluster site.

This sequence belongs to the QueG family. Monomer. Cob(II)alamin is required as a cofactor. [4Fe-4S] cluster serves as cofactor.

The protein resides in the cytoplasm. The catalysed reaction is epoxyqueuosine(34) in tRNA + AH2 = queuosine(34) in tRNA + A + H2O. It functions in the pathway tRNA modification; tRNA-queuosine biosynthesis. Catalyzes the conversion of epoxyqueuosine (oQ) to queuosine (Q), which is a hypermodified base found in the wobble positions of tRNA(Asp), tRNA(Asn), tRNA(His) and tRNA(Tyr). The protein is Epoxyqueuosine reductase of Escherichia coli (strain K12).